A 126-amino-acid polypeptide reads, in one-letter code: Large ribosomal subunit protein bL12 (126 aa).

Belongs to the bacterial ribosomal protein bL12 family. In terms of assembly, homodimer. Part of the ribosomal stalk of the 50S ribosomal subunit. Forms a multimeric L10(L12)X complex, where L10 forms an elongated spine to which 2 to 4 L12 dimers bind in a sequential fashion. Binds GTP-bound translation factors.

Forms part of the ribosomal stalk which helps the ribosome interact with GTP-bound translation factors. Is thus essential for accurate translation. This is Large ribosomal subunit protein bL12 from Bifidobacterium longum (strain DJO10A).